A 146-amino-acid chain; its full sequence is Hut operon positive regulatory protein (146 aa).

It belongs to the HutP family. Homohexamer.

Functionally, antiterminator that binds to cis-acting regulatory sequences on the mRNA in the presence of histidine, thereby suppressing transcription termination and activating the hut operon for histidine utilization. The polypeptide is Hut operon positive regulatory protein (Bacillus cereus (strain ZK / E33L)).